A 173-amino-acid chain; its full sequence is Translation initiation factor IF-3 (173 aa).

It belongs to the IF-3 family. Monomer.

It is found in the cytoplasm. Functionally, IF-3 binds to the 30S ribosomal subunit and shifts the equilibrium between 70S ribosomes and their 50S and 30S subunits in favor of the free subunits, thus enhancing the availability of 30S subunits on which protein synthesis initiation begins. The protein is Translation initiation factor IF-3 of Ehrlichia ruminantium (strain Gardel).